Reading from the N-terminus, the 511-residue chain is ATP synthase subunit alpha (511 aa).

169–176 (GDRQTGKT) serves as a coordination point for ATP.

This sequence belongs to the ATPase alpha/beta chains family. F-type ATPases have 2 components, CF(1) - the catalytic core - and CF(0) - the membrane proton channel. CF(1) has five subunits: alpha(3), beta(3), gamma(1), delta(1), epsilon(1). CF(0) has three main subunits: a(1), b(2) and c(9-12). The alpha and beta chains form an alternating ring which encloses part of the gamma chain. CF(1) is attached to CF(0) by a central stalk formed by the gamma and epsilon chains, while a peripheral stalk is formed by the delta and b chains.

The protein localises to the cell inner membrane. The catalysed reaction is ATP + H2O + 4 H(+)(in) = ADP + phosphate + 5 H(+)(out). Functionally, produces ATP from ADP in the presence of a proton gradient across the membrane. The alpha chain is a regulatory subunit. The chain is ATP synthase subunit alpha from Bartonella quintana (strain Toulouse) (Rochalimaea quintana).